A 240-amino-acid polypeptide reads, in one-letter code: Adapter protein MecA (240 aa).

It belongs to the MecA family. In terms of assembly, homodimer.

Enables the recognition and targeting of unfolded and aggregated proteins to the ClpC protease or to other proteins involved in proteolysis. The sequence is that of Adapter protein MecA from Streptococcus mutans serotype c (strain ATCC 700610 / UA159).